We begin with the raw amino-acid sequence, 674 residues long: MAPFLRISFNSYELGSLQVEDEASQPFCAVKMKEALSTERGKTLVQKKPTMYPEWKTTFDAHIYEGRVIQIVLMRAAEDPVSEVTVGVSVLAERCKKNNGKAEFWLDLQPQAKVLMCVQYFLEDGDCKQSMRSEEEAKFPTMNRRGAIKQAKIHYIKNHEFIATFFGQPTFCSVCKEFVWGLNKQGYKCRQCNAAIHKKCIDKIIGRCTGTATNSRDTIFQKERFNIDMPHRFKVYNYMSPTFCDHCGSLLWGLVKQGLKCEDCGMNVHHKCREKVANLCGINQKLLAEALNQVTQRSSRKLDTTESVGIYQGFEKKPEVSGSDILDNNGTYGKIWEGSTRCTLENFTFQKVLGKGSFGKVLLAELKGKDKYFAIKCLKKDVVLIDDDVECTMVEKRVLALAWESPFLTHLICTFQTKDHLFFVMEFLNGGDLMFHIQDKGRFELYRATFYAAEIICGLQFLHSKGIIYRDLKLDNVMLDRDGHIKIADFGMCKENIFGEGRASTFCGTPDYIAPEILQGLKYSFSVDWWSFGVLLYEMLIGQSPFHGDDEDELFESIRVDTPHYPRWITKESKDIMEKLFERDPDKRLGVTGNIRIHPFFKTINWSLLEKRKVEPPFKPKVKSPSDYSNFDPEFLNEKPQLSFSDKNLIDSMDQEAFHGFSFVNPKFEQFLDI.

The C2 domain maps to 1–106; the sequence is MAPFLRISFN…KNNGKAEFWL (106 aa). T43 and T50 each carry phosphothreonine. The residue at position 64 (Y64) is a Phosphotyrosine. S130 bears the Phosphoserine mark. Residue T141 is modified to Phosphothreonine. Y155 is subject to Phosphotyrosine. Residues 158–208 form a Phorbol-ester/DAG-type 1 zinc finger; it reads NHEFIATFFGQPTFCSVCKEFVWGLNKQGYKCRQCNAAIHKKCIDKIIGRC. The residue at position 218 (T218) is a Phosphothreonine. Residues 230 to 280 form a Phorbol-ester/DAG-type 2 zinc finger; it reads PHRFKVYNYMSPTFCDHCGSLLWGLVKQGLKCEDCGMNVHHKCREKVANLC. A Phosphoserine; by autocatalysis modification is found at S299. Residues Y311 and Y332 each carry the phosphotyrosine; by SRC modification. In terms of domain architecture, Protein kinase spans 347 to 601; the sequence is FTFQKVLGKG…TGNIRIHPFF (255 aa). Position 353–361 (353–361) interacts with ATP; it reads LGKGSFGKV. Y372 is subject to Phosphotyrosine. K376 provides a ligand contact to ATP. T449 is subject to Phosphothreonine. D471 functions as the Proton acceptor in the catalytic mechanism. At S504 the chain carries Phosphoserine. A Phosphothreonine; by autocatalysis modification is found at T505. Y565 is subject to Phosphotyrosine. The 72-residue stretch at 602 to 673 folds into the AGC-kinase C-terminal domain; the sequence is KTINWSLLEK…VNPKFEQFLD (72 aa). Phosphoserine occurs at positions 643, 652, and 662.

The protein belongs to the protein kinase superfamily. AGC Ser/Thr protein kinase family. PKC subfamily. In terms of assembly, interacts with PDPK1 (via N-terminal region). Interacts with RAD9A. Interacts with CDCP1. Interacts with MUC1. Interacts with VASP. Interacts with CAVIN3. Interacts with PRKD2 (via N-terminus and zing-finger domain 1 and 2) in response to oxidative stress; the interaction is independent of PRKD2 tyrosine phosphorylation. Interacts with PLSC3; interaction is enhanced by UV irradiation. Autophosphorylated and/or phosphorylated at Thr-505, within the activation loop; phosphorylation at Thr-505 is not a prerequisite for enzymatic activity. Autophosphorylated at Ser-299. Upon TNFSF10/TRAIL treatment, phosphorylated at Tyr-155; phosphorylation is required for its translocation to the endoplasmic reticulum and cleavage by caspase-3. Phosphorylated at Tyr-311, Tyr-332 and Tyr-565; phosphorylation of Tyr-311 and Tyr-565 following thrombin or zymosan stimulation potentiates its kinase activity. Phosphorylated by protein kinase PDPK1; phosphorylation is inhibited by the apoptotic C-terminal cleavage product of PKN2. Phosphorylated at Tyr-311 through a SYK and SRC mechanism downstream of C-type lectin receptors activation, promoting its activation. In terms of processing, proteolytically cleaved into a catalytic subunit and a regulatory subunit by caspase-3 during apoptosis which results in kinase activation. Isoform 1 is highly expressed in developing pro- and pre-B-cells and moderately in mature T-cells. Isoform 2 is highly expressed in testis and ovary and at a lower level in thymocytes, brain and kidney.

Its subcellular location is the cytoplasm. It localises to the perinuclear region. It is found in the nucleus. The protein localises to the cell membrane. The protein resides in the mitochondrion. Its subcellular location is the endomembrane system. The enzyme catalyses L-seryl-[protein] + ATP = O-phospho-L-seryl-[protein] + ADP + H(+). It catalyses the reaction L-threonyl-[protein] + ATP = O-phospho-L-threonyl-[protein] + ADP + H(+). It carries out the reaction L-tyrosyl-[protein] + ATP = O-phospho-L-tyrosyl-[protein] + ADP + H(+). Its activity is regulated as follows. Novel PKCs (PRKCD, PRKCE, PRKCH and PRKCQ) are calcium-insensitive, but activated by diacylglycerol (DAG) and phosphatidylserine. Three specific sites; Thr-505 (activation loop of the kinase domain), Ser-643 (turn motif) and Ser-662 (hydrophobic region), need to be phosphorylated for its full activation. Activated by caspase-3 (CASP3) cleavage during apoptosis. After cleavage, the pseudosubstrate motif in the regulatory subunit is released from the substrate recognition site of the catalytic subunit, which enables PRKCD to become constitutively activated. The catalytic subunit which displays properties of a sphingosine-dependent protein kinase is activated by D-erythro-sphingosine (Sph) or N,N-dimethyl-D-erythrosphingosine (DMS) or N,N,N-trimethyl-D-erythrosphingosine (TMS), but not by ceramide or Sph-1-P and is strongly inhibited by phosphatidylserine. In terms of biological role, calcium-independent, phospholipid- and diacylglycerol (DAG)-dependent serine/threonine-protein kinase that plays contrasting roles in cell death and cell survival by functioning as a pro-apoptotic protein during DNA damage-induced apoptosis, but acting as an anti-apoptotic protein during cytokine receptor-initiated cell death, is involved in tumor suppression, is required for oxygen radical production by NADPH oxidase and acts as a positive or negative regulator in platelet functional responses. Negatively regulates B cell proliferation and also has an important function in self-antigen induced B cell tolerance induction. Upon DNA damage, activates the promoter of the death-promoting transcription factor BCLAF1/Btf to trigger BCLAF1-mediated p53/TP53 gene transcription and apoptosis. In response to oxidative stress, interact with and activate CHUK/IKKA in the nucleus, causing the phosphorylation of p53/TP53. In the case of ER stress or DNA damage-induced apoptosis, can form a complex with the tyrosine-protein kinase ABL1 which trigger apoptosis independently of p53/TP53. In cytosol can trigger apoptosis by activating MAPK11 or MAPK14, inhibiting AKT1 and decreasing the level of X-linked inhibitor of apoptosis protein (XIAP), whereas in nucleus induces apoptosis via the activation of MAPK8 or MAPK9. Upon ionizing radiation treatment, is required for the activation of the apoptosis regulators BAX and BAK, which trigger the mitochondrial cell death pathway. Can phosphorylate MCL1 and target it for degradation which is sufficient to trigger for BAX activation and apoptosis. Is required for the control of cell cycle progression both at G1/S and G2/M phases. Mediates phorbol 12-myristate 13-acetate (PMA)-induced inhibition of cell cycle progression at G1/S phase by up-regulating the CDK inhibitor CDKN1A/p21 and inhibiting the cyclin CCNA2 promoter activity. In response to UV irradiation can phosphorylate CDK1, which is important for the G2/M DNA damage checkpoint activation. Can protect glioma cells from the apoptosis induced by TNFSF10/TRAIL, probably by inducing increased phosphorylation and subsequent activation of AKT1. Can also act as tumor suppressor upon mitogenic stimulation with PMA or TPA. In N-formyl-methionyl-leucyl-phenylalanine (fMLP)-treated cells, is required for NCF1 (p47-phox) phosphorylation and activation of NADPH oxidase activity, and regulates TNF-elicited superoxide anion production in neutrophils, by direct phosphorylation and activation of NCF1 or indirectly through MAPK1/3 (ERK1/2) signaling pathways. Involved in antifungal immunity by mediating phosphorylation and activation of CARD9 downstream of C-type lectin receptors activation, promoting interaction between CARD9 and BCL10, followed by activation of NF-kappa-B and MAP kinase p38 pathways. May also play a role in the regulation of NADPH oxidase activity in eosinophil after stimulation with IL5, leukotriene B4 or PMA. In collagen-induced platelet aggregation, acts a negative regulator of filopodia formation and actin polymerization by interacting with and negatively regulating VASP phosphorylation. Downstream of PAR1, PAR4 and CD36/GP4 receptors, regulates differentially platelet dense granule secretion; acts as a positive regulator in PAR-mediated granule secretion, whereas it negatively regulates CD36/GP4-mediated granule release. Phosphorylates MUC1 in the C-terminal and regulates the interaction between MUC1 and beta-catenin. The catalytic subunit phosphorylates 14-3-3 proteins (YWHAB, YWHAZ and YWHAH) in a sphingosine-dependent fashion. Phosphorylates ELAVL1 in response to angiotensin-2 treatment. Phosphorylates mitochondrial phospholipid scramblase 3 (PLSCR3), resulting in increased cardiolipin expression on the mitochondrial outer membrane which facilitates apoptosis. Phosphorylates SMPD1 which induces SMPD1 secretion. The protein is Protein kinase C delta type of Mus musculus (Mouse).